The primary structure comprises 656 residues: DNA ligase (656 aa).

NAD(+) is bound by residues 32–36 and 81–82; these read DAVYD and SL. Lys112 functions as the N6-AMP-lysine intermediate in the catalytic mechanism. Residues Arg133, Glu167, and Lys306 each contribute to the NAD(+) site. Residues Cys400, Cys403, Cys416, and Cys421 each contribute to the Zn(2+) site. Positions 577–656 constitute a BRCT domain; it reads ESSSVFSNKT…ELLKRLKEFD (80 aa).

This sequence belongs to the NAD-dependent DNA ligase family. LigA subfamily. Mg(2+) serves as cofactor. It depends on Mn(2+) as a cofactor.

It catalyses the reaction NAD(+) + (deoxyribonucleotide)n-3'-hydroxyl + 5'-phospho-(deoxyribonucleotide)m = (deoxyribonucleotide)n+m + AMP + beta-nicotinamide D-nucleotide.. Its function is as follows. DNA ligase that catalyzes the formation of phosphodiester linkages between 5'-phosphoryl and 3'-hydroxyl groups in double-stranded DNA using NAD as a coenzyme and as the energy source for the reaction. It is essential for DNA replication and repair of damaged DNA. In Helicobacter pylori (strain Shi470), this protein is DNA ligase.